We begin with the raw amino-acid sequence, 95 residues long: Cell division topological specificity factor (95 aa).

It belongs to the MinE family.

In terms of biological role, prevents the cell division inhibition by proteins MinC and MinD at internal division sites while permitting inhibition at polar sites. This ensures cell division at the proper site by restricting the formation of a division septum at the midpoint of the long axis of the cell. This Psychrobacter cryohalolentis (strain ATCC BAA-1226 / DSM 17306 / VKM B-2378 / K5) protein is Cell division topological specificity factor.